Reading from the N-terminus, the 68-residue chain is DNA-directed RNA polymerase subunit omega (68 aa).

The protein belongs to the RNA polymerase subunit omega family. In terms of assembly, the RNAP catalytic core consists of 2 alpha, 1 beta, 1 beta' and 1 omega subunit. When a sigma factor is associated with the core the holoenzyme is formed, which can initiate transcription.

The enzyme catalyses RNA(n) + a ribonucleoside 5'-triphosphate = RNA(n+1) + diphosphate. In terms of biological role, promotes RNA polymerase assembly. Latches the N- and C-terminal regions of the beta' subunit thereby facilitating its interaction with the beta and alpha subunits. This Brevibacillus brevis (strain 47 / JCM 6285 / NBRC 100599) protein is DNA-directed RNA polymerase subunit omega.